A 99-amino-acid chain; its full sequence is ATP-dependent Clp protease adapter protein ClpS (99 aa).

The protein belongs to the ClpS family. As to quaternary structure, binds to the N-terminal domain of the chaperone ClpA.

In terms of biological role, involved in the modulation of the specificity of the ClpAP-mediated ATP-dependent protein degradation. The sequence is that of ATP-dependent Clp protease adapter protein ClpS from Acetivibrio thermocellus (strain ATCC 27405 / DSM 1237 / JCM 9322 / NBRC 103400 / NCIMB 10682 / NRRL B-4536 / VPI 7372) (Clostridium thermocellum).